A 242-amino-acid polypeptide reads, in one-letter code: Octanoyltransferase (242 aa).

In terms of domain architecture, BPL/LPL catalytic spans 31 to 206 (SQTTDEIWFL…LFLKNFGYNQ (176 aa)). Substrate-binding positions include 70 to 77 (RGGQVTYH), 137 to 139 (SIG), and 150 to 152 (GLA). Catalysis depends on Cys168, which acts as the Acyl-thioester intermediate.

The protein belongs to the LipB family.

Its subcellular location is the cytoplasm. The catalysed reaction is octanoyl-[ACP] + L-lysyl-[protein] = N(6)-octanoyl-L-lysyl-[protein] + holo-[ACP] + H(+). It participates in protein modification; protein lipoylation via endogenous pathway; protein N(6)-(lipoyl)lysine from octanoyl-[acyl-carrier-protein]: step 1/2. In terms of biological role, catalyzes the transfer of endogenously produced octanoic acid from octanoyl-acyl-carrier-protein onto the lipoyl domains of lipoate-dependent enzymes. Lipoyl-ACP can also act as a substrate although octanoyl-ACP is likely to be the physiological substrate. In Coxiella burnetii (strain CbuK_Q154) (Coxiella burnetii (strain Q154)), this protein is Octanoyltransferase.